The chain runs to 176 residues: Inorganic pyrophosphatase (176 aa).

Residues Lys-30, Arg-44, and Tyr-56 each coordinate substrate. 3 residues coordinate Mg(2+): Asp-66, Asp-71, and Asp-103. Tyr-142 is a binding site for substrate.

The protein belongs to the PPase family. Homohexamer. Requires Mg(2+) as cofactor.

The protein resides in the cytoplasm. The catalysed reaction is diphosphate + H2O = 2 phosphate + H(+). In terms of biological role, catalyzes the hydrolysis of inorganic pyrophosphate (PPi) forming two phosphate ions. The polypeptide is Inorganic pyrophosphatase (Salmonella typhi).